We begin with the raw amino-acid sequence, 604 residues long: Ribosome-inactivating protein PMRIPm (604 aa).

The signal sequence occupies residues Met-1 to Gln-43. Glu-211 is an active-site residue. Disulfide bonds link Cys-301–Cys-332, Cys-348–Cys-367, and Cys-392–Cys-409. Ricin B-type lectin domains lie at Gly-335–Gly-463 and Val-466–Val-598. The 1-alpha repeat unit spans residues Ala-345–Ser-387. One copy of the 1-beta repeat lies at Leu-389–Asn-429. The stretch at Ser-432–Asp-465 is one 1-gamma repeat. The stretch at Gln-477–Ala-521 is one 2-alpha repeat. Residues Cys-480 and Cys-502 are joined by a disulfide bond. Residue Asn-490 is glycosylated (N-linked (GlcNAc...) asparagine). One copy of the 2-beta repeat lies at Arg-525–Asn-563. The 2-gamma repeat unit spans residues Ala-566–Thr-599.

It belongs to the ribosome-inactivating protein family. Type 2 RIP subfamily. Disulfide-linked dimer of A and B chains. In terms of processing, the precursor is processed in two chains, A and B, that are linked by a disulfide bond. Glycosylated. Post-translationally, the N-terminus is blocked. As to expression, expressed in rhizome and abundantly in leaves (at protein level).

The catalysed reaction is Endohydrolysis of the N-glycosidic bond at one specific adenosine on the 28S rRNA.. With respect to regulation, strongly inhibited by asialofetuin and asialomucin. Functionally, gal/GalNAc-specific agglutinin. Behaves as a type-2 ribosome-inactivating protein. Inhibits mammalian ribosomes. The A chain is responsible for inhibiting protein synthesis through the catalytic inactivation of 60S ribosomal subunits by removing adenine from position 4,324 of 28S rRNA. The B chain binds to cell receptors and probably facilitates the entry into the cell of the A chain; B chains are also responsible for cell agglutination (lectin activity). Involved in plant defense against insects. Has very low cytotoxic activity against the human tumor cell line Molt4, but higher against CEM. This chain is Ribosome-inactivating protein PMRIPm, found in Polygonatum multiflorum (Solomon's seal).